The following is a 119-amino-acid chain: Large ribosomal subunit protein bL20 (119 aa).

This sequence belongs to the bacterial ribosomal protein bL20 family.

Its function is as follows. Binds directly to 23S ribosomal RNA and is necessary for the in vitro assembly process of the 50S ribosomal subunit. It is not involved in the protein synthesizing functions of that subunit. This chain is Large ribosomal subunit protein bL20, found in Polaromonas sp. (strain JS666 / ATCC BAA-500).